Consider the following 238-residue polypeptide: Small proline-rich protein 3 (238 aa).

A disordered region spans residues 1–67 (MSSYQQKQPF…CSTKVPEPGN (67 aa)). S2 is modified (N-acetylserine). Repeat copies occupy residues 52–59 (TKIPEPCS), 60–67 (TKVPEPGN), 68–75 (TVVLEPDY), 76–83 (TTMPGPCS), 84–91 (TNITEPDY), 92–99 (TTIPGPCS), 100–107 (TNITEPDY), 108–115 (TTIPGPCS), 116–123 (TNIPGPDR), 124–131 (TVVPGSCS), 132–139 (TNITEPDY), 140–147 (TTIPGPSS), 148–155 (TKIPDPGC), 156–163 (AMVPGPSP), 164–175 (SSTSEPSSEPCS), 176–183 (INVREPGY), 184–191 (MNASEPTH), 192–199 (AKVPDQGY), 200–207 (TKIPDQGS), 208–215 (SKVPEPCQ), and 216–223 (SRVPEVCP). The segment at 52–223 (TKIPEPCSTK…CQSRVPEVCP (172 aa)) is 21 X 8 AA approximate tandem repeats. The disordered stretch occupies residues 110-238 (IPGPCSTNIP…VSAKQKTKQK (129 aa)). Over residues 163-175 (PSSTSEPSSEPCS) the composition is skewed to low complexity.

It belongs to the cornifin (SPRR) family.

The protein localises to the cytoplasm. In terms of biological role, cross-linked envelope protein of keratinocytes. In Mus musculus (Mouse), this protein is Small proline-rich protein 3 (Sprr3).